A 246-amino-acid polypeptide reads, in one-letter code: Acetoacetate decarboxylase (246 aa).

Catalysis depends on Lys-115, which acts as the Schiff-base intermediate with acetoacetate.

This sequence belongs to the ADC family.

The enzyme catalyses acetoacetate + H(+) = acetone + CO2. Its function is as follows. Catalyzes the conversion of acetoacetate to acetone and carbon dioxide. This Clostridium beijerinckii (Clostridium MP) protein is Acetoacetate decarboxylase.